A 405-amino-acid chain; its full sequence is Cysteine desulfurase IscS (405 aa).

Pyridoxal 5'-phosphate is bound by residues Ala75 to Thr76, Asn156, Gln184, and Ser204 to His206. Lys207 carries the post-translational modification N6-(pyridoxal phosphate)lysine. Thr244 contributes to the pyridoxal 5'-phosphate binding site. The active-site Cysteine persulfide intermediate is Cys329. Cys329 provides a ligand contact to [2Fe-2S] cluster.

Belongs to the class-V pyridoxal-phosphate-dependent aminotransferase family. NifS/IscS subfamily. As to quaternary structure, homodimer. Forms a heterotetramer with IscU, interacts with other sulfur acceptors. Pyridoxal 5'-phosphate serves as cofactor.

The protein localises to the cytoplasm. The catalysed reaction is (sulfur carrier)-H + L-cysteine = (sulfur carrier)-SH + L-alanine. It functions in the pathway cofactor biosynthesis; iron-sulfur cluster biosynthesis. In terms of biological role, master enzyme that delivers sulfur to a number of partners involved in Fe-S cluster assembly, tRNA modification or cofactor biosynthesis. Catalyzes the removal of elemental sulfur atoms from cysteine to produce alanine. Functions as a sulfur delivery protein for Fe-S cluster synthesis onto IscU, an Fe-S scaffold assembly protein, as well as other S acceptor proteins. The polypeptide is Cysteine desulfurase IscS (Acinetobacter baumannii (strain SDF)).